The chain runs to 160 residues: Ureidoglycolate lyase (160 aa).

Belongs to the ureidoglycolate lyase family. In terms of assembly, homodimer. The cofactor is Ni(2+).

It catalyses the reaction (S)-ureidoglycolate = urea + glyoxylate. The protein operates within nitrogen metabolism; (S)-allantoin degradation. Its function is as follows. Catalyzes the catabolism of the allantoin degradation intermediate (S)-ureidoglycolate, generating urea and glyoxylate. Involved in the anaerobic utilization of allantoin as sole nitrogen source. Reinforces the induction of genes involved in the degradation of allantoin and glyoxylate by producing glyoxylate. In Escherichia coli O139:H28 (strain E24377A / ETEC), this protein is Ureidoglycolate lyase.